The sequence spans 67 residues: Large ribosomal subunit protein bL35 (67 aa).

Belongs to the bacterial ribosomal protein bL35 family.

This Anaeromyxobacter sp. (strain Fw109-5) protein is Large ribosomal subunit protein bL35.